The chain runs to 755 residues: Photosystem I P700 chlorophyll a apoprotein A1 (755 aa).

8 helical membrane passes run 72–95 (IFSA…YHGA), 158–181 (LLCT…FHYH), 197–221 (LNHH…HVAI), 297–315 (QAHH…GHMY), 352–375 (WHAQ…QHMY), 391–417 (ISLF…IYMV), 439–461 (AIIS…FYVH), and 536–554 (FMVH…LILL). Positions 578 and 587 each coordinate [4Fe-4S] cluster. A run of 2 helical transmembrane segments spans residues 594 to 615 (HVFL…HFSW) and 669 to 691 (LSAY…MFLF). Residue His-680 participates in chlorophyll a' binding. Positions 688 and 696 each coordinate chlorophyll a. A phylloquinone-binding site is contributed by Trp-697. The chain crosses the membrane as a helical span at residues 729–749 (AVGVAHYLLGGIVTTWAFFLA).

This sequence belongs to the PsaA/PsaB family. As to quaternary structure, the PsaA/B heterodimer binds the P700 chlorophyll special pair and subsequent electron acceptors. PSI consists of a core antenna complex that captures photons, and an electron transfer chain that converts photonic excitation into a charge separation. The cyanobacterial PSI reaction center is composed of one copy each of PsaA,B,C,D,E,F,I,J,K,L,M and X, and forms trimeric complexes. PSI electron transfer chain: 5 chlorophyll a, 1 chlorophyll a', 2 phylloquinones and 3 4Fe-4S clusters. PSI core antenna: 90 chlorophyll a, 22 carotenoids, 3 phospholipids and 1 galactolipid. P700 is a chlorophyll a/chlorophyll a' dimer, A0 is one or more chlorophyll a, A1 is one or both phylloquinones and FX is a shared 4Fe-4S iron-sulfur center. is required as a cofactor.

The protein resides in the cellular thylakoid membrane. The catalysed reaction is reduced [plastocyanin] + hnu + oxidized [2Fe-2S]-[ferredoxin] = oxidized [plastocyanin] + reduced [2Fe-2S]-[ferredoxin]. In terms of biological role, psaA and PsaB bind P700, the primary electron donor of photosystem I (PSI), as well as the electron acceptors A0, A1 and FX. PSI is a plastocyanin/cytochrome c6-ferredoxin oxidoreductase, converting photonic excitation into a charge separation, which transfers an electron from the donor P700 chlorophyll pair to the spectroscopically characterized acceptors A0, A1, FX, FA and FB in turn. Oxidized P700 is reduced on the lumenal side of the thylakoid membrane by plastocyanin or cytochrome c6. The protein is Photosystem I P700 chlorophyll a apoprotein A1 of Synechococcus sp. (strain JA-2-3B'a(2-13)) (Cyanobacteria bacterium Yellowstone B-Prime).